We begin with the raw amino-acid sequence, 162 residues long: UPF0102 protein Bpet0439 (162 aa).

The segment at 15-52 is disordered; it reads QAQQRQMKRRRAAAHRAARGPAPARAPRASPTQRTGTA. The segment covering 20-32 has biased composition (basic residues); sequence QMKRRRAAAHRAA. Residues 33 to 48 are compositionally biased toward low complexity; the sequence is RGPAPARAPRASPTQR.

The protein belongs to the UPF0102 family.

This chain is UPF0102 protein Bpet0439, found in Bordetella petrii (strain ATCC BAA-461 / DSM 12804 / CCUG 43448).